A 173-amino-acid chain; its full sequence is 3-isopropylmalate dehydratase small subunit (173 aa).

It belongs to the LeuD family. LeuD type 2 subfamily. Heterodimer of LeuC and LeuD.

It catalyses the reaction (2R,3S)-3-isopropylmalate = (2S)-2-isopropylmalate. Its pathway is amino-acid biosynthesis; L-leucine biosynthesis; L-leucine from 3-methyl-2-oxobutanoate: step 2/4. Its function is as follows. Catalyzes the isomerization between 2-isopropylmalate and 3-isopropylmalate, via the formation of 2-isopropylmaleate. The polypeptide is 3-isopropylmalate dehydratase small subunit (Caldicellulosiruptor saccharolyticus (strain ATCC 43494 / DSM 8903 / Tp8T 6331)).